The sequence spans 252 residues: ATP synthase subunit a (252 aa).

The next 5 membrane-spanning stretches (helical) occupy residues 33–53 (GQVFITTWIVMGILIVAALAA), 92–112 (VPFVGTLFLFIFVCNWSGALV), 130–150 (DINTTVALALLVSLAYFYAGL), 196–216 (LVVGVLVLLVPLFVPLPVMAL), and 217–237 (GLFTSAIQALVFATLAATYIG).

The protein belongs to the ATPase A chain family. In terms of assembly, F-type ATPases have 2 components, CF(1) - the catalytic core - and CF(0) - the membrane proton channel. CF(1) has five subunits: alpha(3), beta(3), gamma(1), delta(1), epsilon(1). CF(0) has three main subunits: a(1), b(2) and c(9-12). The alpha and beta chains form an alternating ring which encloses part of the gamma chain. CF(1) is attached to CF(0) by a central stalk formed by the gamma and epsilon chains, while a peripheral stalk is formed by the delta and b chains.

The protein localises to the cellular thylakoid membrane. Its function is as follows. Key component of the proton channel; it plays a direct role in the translocation of protons across the membrane. This is ATP synthase subunit a from Synechococcus sp. (strain PCC 6716).